The chain runs to 99 residues: Integration host factor subunit alpha (99 aa).

It belongs to the bacterial histone-like protein family. As to quaternary structure, heterodimer of an alpha and a beta chain.

Functionally, this protein is one of the two subunits of integration host factor, a specific DNA-binding protein that functions in genetic recombination as well as in transcriptional and translational control. The sequence is that of Integration host factor subunit alpha (ihfA) from Xanthomonas axonopodis pv. citri (strain 306).